The primary structure comprises 228 residues: Lipoprotein-releasing system ATP-binding protein LolD (228 aa).

In terms of domain architecture, ABC transporter spans 9-228; sequence LEAHDIQKNF…ELINGCLYRR (220 aa). Residue 44-51 coordinates ATP; the sequence is GRSGEGKS.

This sequence belongs to the ABC transporter superfamily. Lipoprotein translocase (TC 3.A.1.125) family. In terms of assembly, the complex is composed of two ATP-binding proteins (LolD) and two transmembrane proteins (LolC and LolE).

The protein resides in the cell inner membrane. Its function is as follows. Part of the ABC transporter complex LolCDE involved in the translocation of mature outer membrane-directed lipoproteins, from the inner membrane to the periplasmic chaperone, LolA. Responsible for the formation of the LolA-lipoprotein complex in an ATP-dependent manner. The polypeptide is Lipoprotein-releasing system ATP-binding protein LolD (Protochlamydia amoebophila (strain UWE25)).